We begin with the raw amino-acid sequence, 232 residues long: Flagellar L-ring protein (232 aa).

Residues 1 to 21 (MQKNAAHTYAISSLLVLSLTG) form the signal peptide. Cysteine 22 carries N-palmitoyl cysteine lipidation. Cysteine 22 carries S-diacylglycerol cysteine lipidation.

It belongs to the FlgH family. As to quaternary structure, the basal body constitutes a major portion of the flagellar organelle and consists of four rings (L,P,S, and M) mounted on a central rod.

The protein localises to the cell outer membrane. It localises to the bacterial flagellum basal body. Its function is as follows. Assembles around the rod to form the L-ring and probably protects the motor/basal body from shearing forces during rotation. In Shigella dysenteriae serotype 1 (strain Sd197), this protein is Flagellar L-ring protein.